The following is a 157-amino-acid chain: Molybdopterin synthase catalytic subunit (157 aa).

Substrate-binding positions include 103 to 104 (HR), Lys119, and 126 to 128 (KKE).

Belongs to the MoaE family. MOCS2B subfamily. In terms of assembly, heterotetramer; composed of 2 small (MOCS2A) and 2 large (MOCS2B) subunits.

The protein resides in the cytoplasm. The enzyme catalyses 2 [molybdopterin-synthase sulfur-carrier protein]-C-terminal-Gly-aminoethanethioate + cyclic pyranopterin phosphate + H2O = molybdopterin + 2 [molybdopterin-synthase sulfur-carrier protein]-C-terminal Gly-Gly + 2 H(+). The protein operates within cofactor biosynthesis; molybdopterin biosynthesis. Catalytic subunit of the molybdopterin synthase complex, a complex that catalyzes the conversion of precursor Z into molybdopterin. Acts by mediating the incorporation of 2 sulfur atoms from thiocarboxylated MOCS2A into precursor Z to generate a dithiolene group. This Culex quinquefasciatus (Southern house mosquito) protein is Molybdopterin synthase catalytic subunit.